A 185-amino-acid polypeptide reads, in one-letter code: ATP synthase subunit delta (185 aa).

This sequence belongs to the ATPase delta chain family. As to quaternary structure, F-type ATPases have 2 components, F(1) - the catalytic core - and F(0) - the membrane proton channel. F(1) has five subunits: alpha(3), beta(3), gamma(1), delta(1), epsilon(1). F(0) has three main subunits: a(1), b(2) and c(10-14). The alpha and beta chains form an alternating ring which encloses part of the gamma chain. F(1) is attached to F(0) by a central stalk formed by the gamma and epsilon chains, while a peripheral stalk is formed by the delta and b chains.

The protein resides in the cell inner membrane. Functionally, f(1)F(0) ATP synthase produces ATP from ADP in the presence of a proton or sodium gradient. F-type ATPases consist of two structural domains, F(1) containing the extramembraneous catalytic core and F(0) containing the membrane proton channel, linked together by a central stalk and a peripheral stalk. During catalysis, ATP synthesis in the catalytic domain of F(1) is coupled via a rotary mechanism of the central stalk subunits to proton translocation. Its function is as follows. This protein is part of the stalk that links CF(0) to CF(1). It either transmits conformational changes from CF(0) to CF(1) or is implicated in proton conduction. In Ehrlichia chaffeensis (strain ATCC CRL-10679 / Arkansas), this protein is ATP synthase subunit delta.